A 443-amino-acid polypeptide reads, in one-letter code: Oxygen-dependent coproporphyrinogen-III oxidase, mitochondrial (443 aa).

The N-terminal 98 residues, 1–98 (MALRLGQLGS…EMVPKSSGAR (98 aa)), are a transit peptide targeting the mitochondrion. The interval 90–111 (MVPKSSGARSPSPGRLEEDGDE) is disordered. The residue at position 101 (Ser-101) is a Phosphoserine. Positions 182 to 191 (VLQDGRVFEK) are important for dimerization. Ser-233 is a coproporphyrinogen III binding site. The Proton donor role is filled by His-247. Residue 249–251 (NYR) coordinates coproporphyrinogen III. The important for dimerization stretch occupies residues 381 to 417 (YVEFNLVYDRGTKFGLFTPGSRIESILMSLPLTARWE). Residue Lys-393 is modified to N6-acetyllysine; alternate. Position 393 is an N6-succinyllysine; alternate (Lys-393). 400–402 (GSR) serves as a coordination point for coproporphyrinogen III.

It belongs to the aerobic coproporphyrinogen-III oxidase family. In terms of assembly, homodimer.

It localises to the mitochondrion intermembrane space. The catalysed reaction is coproporphyrinogen III + O2 + 2 H(+) = protoporphyrinogen IX + 2 CO2 + 2 H2O. It functions in the pathway porphyrin-containing compound metabolism; protoporphyrin-IX biosynthesis; protoporphyrinogen-IX from coproporphyrinogen-III (O2 route): step 1/1. Functionally, involved in the heme biosynthesis. Catalyzes the aerobic oxidative decarboxylation of propionate groups of rings A and B of coproporphyrinogen-III to yield the vinyl groups in protoporphyrinogen-IX. This Rattus norvegicus (Rat) protein is Oxygen-dependent coproporphyrinogen-III oxidase, mitochondrial.